Consider the following 422-residue polypeptide: Adhesin YadA (422 aa).

An N-terminal signal peptide occupies residues 1-25 (MTKDFKISVSAALISALFSSPYAFA). The interval 26–330 (NNDEVHFTAV…KKAIRESNQY (305 aa)) is surface exposed passenger domain. Residues 206-236 (VNVAQLKKEIEKTQVNANKKSAEVLGIANNY) adopt a coiled-coil conformation. An outer membrane translocation of the passenger domain region spans residues 331 to 368 (TDHKFRQLDNRLDKLDTRVDKGLASSAALNSLFQPYGV). Beta stranded transmembrane passes span 369–379 (GKVNFTAGVGG), 383–394 (SQALAIGSGYRV), 401–407 (KAGVAYA), and 411–422 (DVMYNASFNIEW). The translocator domain stretch occupies residues 369–422 (GKVNFTAGVGGYRSSQALAIGSGYRVNESVALKAGVAYAGSSDVMYNASFNIEW).

Belongs to the autotransporter-2 (AT-2) (TC 1.B.40) family. As to quaternary structure, homotrimer; trimers are very stable, not disrupted by heating at 95 degrees Celsius for 10 minutes in SDS sample buffer.

Its subcellular location is the cell surface. It is found in the cell outer membrane. In terms of biological role, collagen-binding outer membrane protein forming a fibrillar matrix on the bacterial cell surface and phagocytosis resistance. Promotes initial attachment and invasion of eukaryotic cells. Also protects the bacteria by being responsible for agglutination, serum resistance and complement inactivation. Gly-389 plays an important role in this protein; replacing it with increasingly large polar residues decreases expression levels and trimer stability. Residues larger than Ser (Thr, Asn or His) significantly decrease serume resistance and bacterial autoagglution without affecting adhesion to host cells or host cell cytokine production. This Yersinia enterocolitica serotype O:8 / biotype 1B (strain NCTC 13174 / 8081) protein is Adhesin YadA.